Consider the following 885-residue polypeptide: Phycobiliprotein ApcE (885 aa).

C185 contacts (2R,3E)-phycocyanobilin. PBS-linker domains are found at residues 242–422 (DVQG…FRKV), 498–680 (KSIG…NSKK), and 694–871 (NSIQ…KQSS).

This sequence belongs to the phycobilisome linker protein family. Contains one covalently linked bilin chromophore. This protein autochromophorylates (Potential).

It is found in the plastid. The protein resides in the chloroplast thylakoid membrane. In terms of biological role, this protein is postulated to act both as terminal energy acceptor and as a linker polypeptide that stabilizes the phycobilisome architecture. May have intrinsic bilin lyase activity. The chain is Phycobiliprotein ApcE (apcE) from Aglaothamnion neglectum (Red alga).